Consider the following 149-residue polypeptide: D-aminoacyl-tRNA deacylase (149 aa).

The short motif at 137–138 is the Gly-cisPro motif, important for rejection of L-amino acids element; it reads GP.

Belongs to the DTD family. In terms of assembly, homodimer.

The protein localises to the cytoplasm. The catalysed reaction is glycyl-tRNA(Ala) + H2O = tRNA(Ala) + glycine + H(+). It carries out the reaction a D-aminoacyl-tRNA + H2O = a tRNA + a D-alpha-amino acid + H(+). Its function is as follows. An aminoacyl-tRNA editing enzyme that deacylates mischarged D-aminoacyl-tRNAs. Also deacylates mischarged glycyl-tRNA(Ala), protecting cells against glycine mischarging by AlaRS. Acts via tRNA-based rather than protein-based catalysis; rejects L-amino acids rather than detecting D-amino acids in the active site. By recycling D-aminoacyl-tRNA to D-amino acids and free tRNA molecules, this enzyme counteracts the toxicity associated with the formation of D-aminoacyl-tRNA entities in vivo and helps enforce protein L-homochirality. This chain is D-aminoacyl-tRNA deacylase, found in Syntrophus aciditrophicus (strain SB).